The following is a 121-amino-acid chain: MKLKFSKHTSERKVNRLKKKIRIRKTVKGTAERPRLCVFRSGKHVYAQIINDVDGNTLVAVSSLGKEDKSGIDMAKLVGMEAAKAATAKNIKDVVFDRNGYLYHGRVKSLADGAREGGLNF.

This sequence belongs to the universal ribosomal protein uL18 family. In terms of assembly, part of the 50S ribosomal subunit; part of the 5S rRNA/L5/L18/L25 subcomplex. Contacts the 5S and 23S rRNAs.

This is one of the proteins that bind and probably mediate the attachment of the 5S RNA into the large ribosomal subunit, where it forms part of the central protuberance. In Bdellovibrio bacteriovorus (strain ATCC 15356 / DSM 50701 / NCIMB 9529 / HD100), this protein is Large ribosomal subunit protein uL18.